The chain runs to 405 residues: Acetate kinase (405 aa).

Asn7 lines the Mg(2+) pocket. Lys14 is an ATP binding site. Arg98 contacts substrate. The active-site Proton donor/acceptor is the Asp155. ATP contacts are provided by residues 215-219 (HLGNG), 289-291 (DMR), and 337-341 (GIGEN). Glu391 is a Mg(2+) binding site.

The protein belongs to the acetokinase family. As to quaternary structure, homodimer. Mg(2+) serves as cofactor. Mn(2+) is required as a cofactor.

It is found in the cytoplasm. The catalysed reaction is acetate + ATP = acetyl phosphate + ADP. Its pathway is metabolic intermediate biosynthesis; acetyl-CoA biosynthesis; acetyl-CoA from acetate: step 1/2. Its function is as follows. Catalyzes the formation of acetyl phosphate from acetate and ATP. Can also catalyze the reverse reaction. The protein is Acetate kinase of Desulfotalea psychrophila (strain LSv54 / DSM 12343).